The following is a 1090-amino-acid chain: MAQSIVVDGDYDALASRYLKFVYDFENVTYQNNYFATDKFKKDIEQYLKSIHDGEKITQSKIDEKEKILLDRVPAEERCLISKLVFAYGKHGNVENKLVKYGVKDALSHAPQKDAKPYENNIITSEIFKEKSEYTDIYMDPSINTSCQSNCQAMMFTISEMKLNNIKNAARLEKLFTIIAATINKYGMPRHNTRYRYEWETMKNKPYHLAAWINSSIEMIACVVDHHTYMIARELIVKSFTNRTSLAKLVSSPMTVLTAMLPIRGTFITTENLELEYSNKSINYLISKEMAEDFMQAIKQLRDEGLEYIPDYYEKWFKSPDPLTFPNIALIYSFSFHVGYRKQALSDAVYDQITVTYSDNVNMEMYKEYSERIENEIFTILKDKIIHEDKRLEEYELSALLSMSSASNGILREINFGGQKVRSTKKNMHVIDDIYHKKYTTDIPPVDARNPIPLGRRDVPGRRTRAIFILPYQYFIAQHSFAEIMLNYAKREREYSEFYSQANQVLSYGDVTRYLDSNSILCFTDVSQWDASQHNTKVLRRSIIRAMKRLKQLTHNINIHKAINIYIQSQENLENSYVLIDKKAIQYGATASGEKQTKIMNSIANKALIQTVLGKLMTDYTFDVKMIRVDGDDNYAIVRFPIAITEKLLSEFTSKLRSYYSEMNVKVKALASLTGCEIAKRYVAGGMLFFRAGVNILHHEKRNQDSAYDMAATLYANYIVNALRGLTMSRTFILTKICQMTSIKITGTLRLFPMKSILALNSAFKVFDEVDYVINYPISNLFIQLQRKLSSIKAKSKIADNIAKSPQFKSYVELLNKSLTTDENPIVSDGIRLTEKAKLNSYAPIALEKRRDQFSIMVSFLQNPTTFKSETVVTINDVLYFISGFIKIDSSTVLPKEENNTMPLLPAIIKRTLSYFGLRTHDYDIKGSSSTVSKIIKQYSVYTPGIEELYEIVNKSVDTIRGYFASFNVPKADVDTYISTQMYKHDRFKILQAYIYNLLSVNYGMYQLVDLNSARFFDHVIHTPMAKTPTAVFMIDLALRLKIINHCIEKGEIITVSVHANKTDYLKLWRMLWNVKTMNSPYSKNSMFDE.

Residues 506–678 enclose the RdRp catalytic domain; that stretch reads LSYGDVTRYL…ALASLTGCEI (173 aa).

The protein belongs to the reoviridae RNA-directed RNA polymerase family. As to quaternary structure, interacts with VP3 (Potential). Interacts with VP2; this interaction activates VP1. Interacts with NSP5; this interaction is probably necessary for the formation of functional virus factories. Interacts with NSP2; this interaction is weak. Requires Mg(2+) as cofactor.

The protein resides in the virion. It carries out the reaction RNA(n) + a ribonucleoside 5'-triphosphate = RNA(n+1) + diphosphate. RNA-directed RNA polymerase that is involved in both transcription and genome replication. Together with VP3 capping enzyme, forms an enzyme complex positioned near the channels situated at each of the five-fold vertices of the core. Following infection, the outermost layer of the virus is lost, leaving a double-layered particle (DLP) made up of the core and VP6 shell. VP1 then catalyzes the transcription of fully conservative plus-strand genomic RNAs that are extruded through the DLP's channels into the cytoplasm where they function as mRNAs for translation of viral proteins. One copy of each of the viral (+)RNAs is also recruited during core assembly, together with newly synthesized polymerase complexes and VP2. The polymerase of these novo-formed particles catalyzes the synthesis of complementary minus-strands leading to dsDNA formation. To do so, the polymerase specifically recognizes conserved 3' sequence(s) in plus-strand RNA templates. Once dsRNA synthesis is complete, the polymerase switches to the transcriptional mode, thus providing secondary transcription. This chain is RNA-directed RNA polymerase, found in Rotavirus C (isolate RVC/Human/United Kingdom/Bristol/1989) (RV-C).